The chain runs to 534 residues: ATP-dependent rRNA helicase RRP3 (534 aa).

Positions 67 to 107 (KQQALQKQQKQQKQQEQENANHNQTESSLSSSSSTTSSSIT) are disordered. Composition is skewed to low complexity over residues 68–80 (QQAL…QQKQ) and 91–107 (TESS…SSIT). Residues 118–146 (KTFKELNLVPDLLESIESMKFTKPTPIQS) carry the Q motif motif. In terms of domain architecture, Helicase ATP-binding spans 149–320 (IPHALEGKDI…RASLHNPVRV (172 aa)). An ATP-binding site is contributed by 162 to 169 (AQTGSGKT). The DEAD box motif lies at 268-271 (DEAD). The Helicase C-terminal domain maps to 347–492 (ILIHLLNEFM…EDKPPKEVLD (146 aa)). Composition is skewed to basic and acidic residues over residues 505–517 (AIRQ…DKRN) and 525–534 (NRDDADREER). Positions 505 to 534 (AIRQTKEIHDKRNGGGGRRRNRDDADREER) are disordered.

It belongs to the DEAD box helicase family. DDX47/RRP3 subfamily. Interacts with the SSU processome.

It localises to the nucleus. It carries out the reaction ATP + H2O = ADP + phosphate + H(+). Functionally, ATP-dependent rRNA helicase required for pre-ribosomal RNA processing. Involved in the maturation of the 35S-pre-rRNA and to its cleavage to mature 18S rRNA. The protein is ATP-dependent rRNA helicase RRP3 of Candida albicans (strain SC5314 / ATCC MYA-2876) (Yeast).